A 232-amino-acid polypeptide reads, in one-letter code: Syntaxin-51 (232 aa).

The Cytoplasmic portion of the chain corresponds to 1–208 (MASSSDSWMR…NKNMRSGCSC (208 aa)). In terms of domain architecture, t-SNARE coiled-coil homology spans 136-198 (RQVMREQDEG…RRVQKSLAVM (63 aa)). The chain crosses the membrane as a helical; Anchor for type IV membrane protein span at residues 209–229 (MSMLLSVLGIVGLAVVIWMLV). Residues 230–232 (KYM) lie on the Vesicular side of the membrane.

Belongs to the syntaxin family. Interacts with VTI11 and either SYP21, or SYP22, or SYP61 in the prevacuolar compartment, or with VTI12 and SYP61 in the trans-Golgi network to form t-SNARE complexes. As to expression, expressed in root, leaf, stem, flower and silique.

The protein resides in the golgi apparatus. It localises to the trans-Golgi network membrane. It is found in the prevacuolar compartment membrane. Functionally, vesicle trafficking protein that functions in the secretory pathway. The polypeptide is Syntaxin-51 (SYP51) (Arabidopsis thaliana (Mouse-ear cress)).